The chain runs to 187 residues: Small ribosomal subunit protein uS7 (187 aa).

The protein belongs to the universal ribosomal protein uS7 family. Part of the 30S ribosomal subunit.

Functionally, one of the primary rRNA binding proteins, it binds directly to 16S rRNA where it nucleates assembly of the head domain of the 30S subunit. Is located at the subunit interface close to the decoding center. The chain is Small ribosomal subunit protein uS7 from Methanosphaera stadtmanae (strain ATCC 43021 / DSM 3091 / JCM 11832 / MCB-3).